The chain runs to 308 residues: UDP-3-O-acyl-N-acetylglucosamine deacetylase (308 aa).

Positions 78, 235, and 239 each coordinate Zn(2+). Histidine 262 acts as the Proton donor in catalysis.

The protein belongs to the LpxC family. Zn(2+) serves as cofactor.

The enzyme catalyses a UDP-3-O-[(3R)-3-hydroxyacyl]-N-acetyl-alpha-D-glucosamine + H2O = a UDP-3-O-[(3R)-3-hydroxyacyl]-alpha-D-glucosamine + acetate. The protein operates within glycolipid biosynthesis; lipid IV(A) biosynthesis; lipid IV(A) from (3R)-3-hydroxytetradecanoyl-[acyl-carrier-protein] and UDP-N-acetyl-alpha-D-glucosamine: step 2/6. Catalyzes the hydrolysis of UDP-3-O-myristoyl-N-acetylglucosamine to form UDP-3-O-myristoylglucosamine and acetate, the committed step in lipid A biosynthesis. This is UDP-3-O-acyl-N-acetylglucosamine deacetylase from Anaeromyxobacter dehalogenans (strain 2CP-C).